We begin with the raw amino-acid sequence, 181 residues long: Oligoribonuclease (181 aa).

The Exonuclease domain occupies 8 to 171 (LIWIDLEMTG…QDIQESIAEL (164 aa)). The active site involves Tyr129.

The protein belongs to the oligoribonuclease family.

The protein resides in the cytoplasm. Functionally, 3'-to-5' exoribonuclease specific for small oligoribonucleotides. The protein is Oligoribonuclease of Shewanella sp. (strain MR-4).